Reading from the N-terminus, the 100-residue chain is Large ribosomal subunit protein uL23 (100 aa).

Belongs to the universal ribosomal protein uL23 family. In terms of assembly, part of the 50S ribosomal subunit. Contacts protein L29, and trigger factor when it is bound to the ribosome.

Its function is as follows. One of the early assembly proteins it binds 23S rRNA. One of the proteins that surrounds the polypeptide exit tunnel on the outside of the ribosome. Forms the main docking site for trigger factor binding to the ribosome. The chain is Large ribosomal subunit protein uL23 from Mycobacteroides abscessus (strain ATCC 19977 / DSM 44196 / CCUG 20993 / CIP 104536 / JCM 13569 / NCTC 13031 / TMC 1543 / L948) (Mycobacterium abscessus).